Reading from the N-terminus, the 1141-residue chain is Probable ubiquitin carboxyl-terminal hydrolase 2 (1141 aa).

Residue Thr112 is modified to Phosphothreonine. Ser113 is modified (phosphoserine). Thr115 carries the post-translational modification Phosphothreonine. The USP domain maps to 614-1124 (IGLENTGNLC…NPYMLTYIRK (511 aa)). Catalysis depends on Cys623, which acts as the Nucleophile. At Thr721 the chain carries Phosphothreonine. At Ser722 the chain carries Phosphoserine. Residues 748-770 (EEQAQGLEQEQGQDEAKSPAEQS) are disordered. His1076 (proton acceptor) is an active-site residue.

It belongs to the peptidase C19 family.

It carries out the reaction Thiol-dependent hydrolysis of ester, thioester, amide, peptide and isopeptide bonds formed by the C-terminal Gly of ubiquitin (a 76-residue protein attached to proteins as an intracellular targeting signal).. The sequence is that of Probable ubiquitin carboxyl-terminal hydrolase 2 (ubp2) from Schizosaccharomyces pombe (strain 972 / ATCC 24843) (Fission yeast).